The primary structure comprises 143 residues: Large ribosomal subunit protein uL15 (143 aa).

Residues Met1–Arg48 form a disordered region. Residues Gly11–Gly20 are compositionally biased toward basic residues. The span at Arg21–Ser31 shows a compositional bias: gly residues.

The protein belongs to the universal ribosomal protein uL15 family. As to quaternary structure, part of the 50S ribosomal subunit.

Its function is as follows. Binds to the 23S rRNA. This chain is Large ribosomal subunit protein uL15, found in Baumannia cicadellinicola subsp. Homalodisca coagulata.